The chain runs to 329 residues: Ankyrin repeat and SOCS box protein 5 (329 aa).

ANK repeat units follow at residues 69–98, 102–131, 135–164, 167–196, 200–229, and 232–261; these read ADRS…NVNA, DHVT…NVNA, DGVT…KPQL, CLPS…DVDQ, HLGT…DVQK, and YWDT…DINA. Residues 278-329 form the SOCS box domain; sequence LVERLLLQHEATPSSLCQLCRLCIRNYIGRPRLHLIPQLQLPTLLQNFLQYR.

This sequence belongs to the ankyrin SOCS box (ASB) family.

It functions in the pathway protein modification; protein ubiquitination. May be a substrate-recognition component of a SCF-like ECS (Elongin-Cullin-SOCS-box protein) E3 ubiquitin-protein ligase complex which mediates the ubiquitination and subsequent proteasomal degradation of target proteins. May play a role in the initiation of arteriogenesis. The chain is Ankyrin repeat and SOCS box protein 5 (ASB5) from Bos taurus (Bovine).